The following is a 129-amino-acid chain: Glycine cleavage system H protein (129 aa).

Residues 23-104 (SVTVGITHHA…AYTAWLFKIK (82 aa)) enclose the Lipoyl-binding domain. N6-lipoyllysine is present on lysine 64.

The protein belongs to the GcvH family. The glycine cleavage system is composed of four proteins: P, T, L and H. (R)-lipoate is required as a cofactor.

Its function is as follows. The glycine cleavage system catalyzes the degradation of glycine. The H protein shuttles the methylamine group of glycine from the P protein to the T protein. This is Glycine cleavage system H protein from Thiobacillus denitrificans (strain ATCC 25259 / T1).